A 328-amino-acid chain; its full sequence is Putative tyrosine-protein kinase C03B1.5 (328 aa).

One can recognise a Protein kinase domain in the interval 25–288 (WSPALKIGSG…ALHASSQTYL (264 aa)). ATP contacts are provided by residues 31 to 39 (IGSGAFGEV) and Lys62. The Proton acceptor role is filled by Asp155.

The protein belongs to the protein kinase superfamily. Tyr protein kinase family.

It catalyses the reaction L-tyrosyl-[protein] + ATP = O-phospho-L-tyrosyl-[protein] + ADP + H(+). In Caenorhabditis elegans, this protein is Putative tyrosine-protein kinase C03B1.5.